A 664-amino-acid polypeptide reads, in one-letter code: Protein SIEVE ELEMENT OCCLUSION C (664 aa).

The polypeptide is Protein SIEVE ELEMENT OCCLUSION C (Arabidopsis thaliana (Mouse-ear cress)).